The sequence spans 438 residues: Trigger factor (438 aa).

In terms of domain architecture, PPIase FKBP-type spans 162 to 247; it reads GDIVTIDFEG…VKEIKVKELP (86 aa).

The protein belongs to the FKBP-type PPIase family. Tig subfamily.

It is found in the cytoplasm. It catalyses the reaction [protein]-peptidylproline (omega=180) = [protein]-peptidylproline (omega=0). Its function is as follows. Involved in protein export. Acts as a chaperone by maintaining the newly synthesized protein in an open conformation. Functions as a peptidyl-prolyl cis-trans isomerase. The chain is Trigger factor from Caldicellulosiruptor saccharolyticus (strain ATCC 43494 / DSM 8903 / Tp8T 6331).